Here is a 251-residue protein sequence, read N- to C-terminus: HTH-type transcriptional regulator UlaR (251 aa).

The HTH deoR-type domain maps to 3–58 (EAQRHQILLEMLAQLGFVTVEKVVERLGISPATARRDINKLDESGKLKKVRNGAEA). Residues 20–39 (VTVEKVVERLGISPATARRD) constitute a DNA-binding region (H-T-H motif).

The protein localises to the cytoplasm. Represses ulaG and the ulaABCDEF operon. The polypeptide is HTH-type transcriptional regulator UlaR (Escherichia coli O139:H28 (strain E24377A / ETEC)).